A 1037-amino-acid polypeptide reads, in one-letter code: Signal-induced proliferation-associated protein 1 (1037 aa).

Positions 1–85 (MWAGGVGSPR…ASRPAATPTR (85 aa)) are disordered. Phosphothreonine is present on Thr62. Phosphoserine occurs at positions 65, 178, 299, and 309. Residues 316–534 (LLTLDEQVLS…RTRQQYLQDL (219 aa)) form the Rap-GAP domain. The PDZ domain occupies 682–758 (ELALPRDGQG…VCVTVLPPDE (77 aa)). Phosphoserine occurs at positions 812 and 834. Disordered stretches follow at residues 830–849 (HNSLSSGSSLSDEAPVLPNT) and 855–898 (LVTT…ASIL). The segment covering 871 to 881 (PPSQDQSGSPS) has biased composition (low complexity). A Phosphoserine modification is found at Ser907. Residues 943 to 969 (REGQPISESGDPKEALKCDSEPEPGSL) form a disordered region. A compositionally biased stretch (basic and acidic residues) spans 952–962 (GDPKEALKCDS). A coiled-coil region spans residues 968–1025 (SLSEKVSHLESMLWKLQEDLQREKADRAALEEEVRSLRHNNQRLLAESESAATRLLLA).

In terms of assembly, interacts with RRP1B; the interaction leads to inhibition of SIPA1 GTPase activity. Preferentially expressed in both fetal and adult lymphohematopoietic tissues.

It localises to the nucleus. The protein resides in the cytoplasm. The protein localises to the perinuclear region. Its subcellular location is the endomembrane system. Functionally, GTPase activator for the nuclear Ras-related regulatory proteins Rap1, Rsr1 and Ran in vitro, converting them to the putatively inactive GDP-bound state. Affects cell cycle progression. This chain is Signal-induced proliferation-associated protein 1 (Sipa1), found in Mus musculus (Mouse).